The primary structure comprises 121 residues: Large ribosomal subunit protein bL19 (121 aa).

This sequence belongs to the bacterial ribosomal protein bL19 family.

This protein is located at the 30S-50S ribosomal subunit interface and may play a role in the structure and function of the aminoacyl-tRNA binding site. This chain is Large ribosomal subunit protein bL19, found in Chlamydia trachomatis serovar L2 (strain ATCC VR-902B / DSM 19102 / 434/Bu).